A 621-amino-acid polypeptide reads, in one-letter code: ATP-dependent lipid A-core flippase (621 aa).

A run of 5 helical transmembrane segments spans residues 32–52 (IVAA…LAAF), 91–111 (VWGT…LVVI), 192–212 (IVLL…FPLL), 286–306 (SPFS…IALW), and 312–332 (YTTI…YAPI). The ABC transmembrane type-1 domain maps to 33 to 344 (VAALIAIFGV…LANISIPMQT (312 aa)). The 234-residue stretch at 378–611 (FRNVDVEYRS…NGYYTMLRNI (234 aa)) folds into the ABC transporter domain. Position 410-417 (410-417 (GRSGSGKS)) interacts with ATP.

This sequence belongs to the ABC transporter superfamily. Lipid exporter (TC 3.A.1.106) family. In terms of assembly, homodimer.

Its subcellular location is the cell inner membrane. It catalyses the reaction ATP + H2O + lipid A-core oligosaccharideSide 1 = ADP + phosphate + lipid A-core oligosaccharideSide 2.. Functionally, involved in lipopolysaccharide (LPS) biosynthesis. Translocates lipid A-core from the inner to the outer leaflet of the inner membrane. Transmembrane domains (TMD) form a pore in the inner membrane and the ATP-binding domain (NBD) is responsible for energy generation. The protein is ATP-dependent lipid A-core flippase of Neisseria meningitidis serogroup B (strain ATCC BAA-335 / MC58).